The following is a 277-amino-acid chain: MNWFEVALLGLVQGLTEFLPISSSAHLRIVGQFLPNAEDPGAAFTAITQLGTETAVVVYFWRDIVRIVKAWAGSLAGKVSRQDPDARMGWLVILGSLPIIVLGLLFQDQIESVLRSMWIVATMLIVFGLILAVADAVGKQERDLTQLTYKHGILYGFAQAMALIPGVSRSGGTITAGLLMGYTREAAARYSFLLAIPAVFGSGLYQLYKVVSKDGITGPYGLPETALATVIAFVVGYVIIGWFLKFVSTRSYRLFVWYRIFLGLALYLLLGFGVISA.

6 helical membrane passes run 88-108 (MGWL…LFQD), 117-137 (MWIV…ADAV), 157-179 (FAQA…AGLL), 191-211 (SFLL…YKVV), 227-247 (LATV…LKFV), and 255-275 (FVWY…FGVI).

Belongs to the UppP family.

The protein resides in the cell membrane. The catalysed reaction is di-trans,octa-cis-undecaprenyl diphosphate + H2O = di-trans,octa-cis-undecaprenyl phosphate + phosphate + H(+). In terms of biological role, catalyzes the dephosphorylation of undecaprenyl diphosphate (UPP). Confers resistance to bacitracin. This chain is Undecaprenyl-diphosphatase, found in Pseudarthrobacter chlorophenolicus (strain ATCC 700700 / DSM 12829 / CIP 107037 / JCM 12360 / KCTC 9906 / NCIMB 13794 / A6) (Arthrobacter chlorophenolicus).